Reading from the N-terminus, the 222-residue chain is MSFTRRKFVLGMGTVIFFTGSASSLLANTRQEKEVRYAMIHDESRCNGCNICARACRKTNHAPAQGSRLSIAHIPVTDNDNETQYHFFRQSCQHCEDAPCIDVCPTGASWRDEQGIVRVEKSQCIGCSYCIGACPYQVRYLNPVTKVADKCDFCAESRLAKGFPPICVSACPEHALIFGREDSPEIQAWLQDNKYYQYQLPGAGKPHLYRRFGQHLIKKENV.

Residues 1–27 (MSFTRRKFVLGMGTVIFFTGSASSLLA) constitute a signal peptide (tat-type signal). 4Fe-4S ferredoxin-type domains follow at residues 37–66 (YAMIHDESRCNGCNICARACRKTNHAPAQG), 83–114 (TQYHFFRQSCQHCEDAPCIDVCPTGASWRDEQ), and 115–144 (GIVRVEKSQCIGCSYCIGACPYQVRYLNPV). Residues Cys-46, Cys-49, Cys-52, Cys-56, Cys-92, Cys-95, Cys-100, Cys-104, Cys-124, Cys-127, Cys-130, Cys-134, Cys-151, Cys-154, Cys-167, and Cys-171 each coordinate [4Fe-4S] cluster.

Predicted to be exported by the Tat system. The position of the signal peptide cleavage has not been experimentally proven.

This is an uncharacterized protein from Escherichia coli O157:H7.